The chain runs to 511 residues: Histidine ammonia-lyase (511 aa).

Positions 142–144 (ASG) form a cross-link, 5-imidazolinone (Ala-Gly). S143 bears the 2,3-didehydroalanine (Ser) mark.

The protein belongs to the PAL/histidase family. In terms of processing, contains an active site 4-methylidene-imidazol-5-one (MIO), which is formed autocatalytically by cyclization and dehydration of residues Ala-Ser-Gly.

It is found in the cytoplasm. The enzyme catalyses L-histidine = trans-urocanate + NH4(+). It participates in amino-acid degradation; L-histidine degradation into L-glutamate; N-formimidoyl-L-glutamate from L-histidine: step 1/3. The protein is Histidine ammonia-lyase of Chelativorans sp. (strain BNC1).